The chain runs to 250 residues: GTP cyclohydrolase 1 (250 aa).

Basic and acidic residues-rich tracts occupy residues 1-14 (MEKG…EKPR) and 35-44 (PAEKPPRPEA). A disordered region spans residues 1–64 (MEKGPVRAPA…GERPRSEEDN (64 aa)). A phosphoserine mark is found at Ser-60 and Ser-81. Zn(2+)-binding residues include Cys-141, His-144, and Cys-212.

It belongs to the GTP cyclohydrolase I family. Toroid-shaped homodecamer, composed of a dimer of pentamers. The inactive isoforms also form decamers and may possibly be incorporated into GCH1 heterodecamers, decreasing enzyme stability and activity. Interacts with AHSA1 and GCHFR/GFRP. Phosphorylated by casein kinase II at Ser-81 in HAECs during oscillatory shear stress; phosphorylation at Ser-81 results in increased enzyme activity. In epidermis, expressed predominantly in basal undifferentiated keratinocytes and in some but not all melanocytes (at protein level).

It localises to the cytoplasm. It is found in the nucleus. It carries out the reaction GTP + H2O = 7,8-dihydroneopterin 3'-triphosphate + formate + H(+). Its pathway is cofactor biosynthesis; 7,8-dihydroneopterin triphosphate biosynthesis; 7,8-dihydroneopterin triphosphate from GTP: step 1/1. With respect to regulation, GTP shows a positive allosteric effect, and tetrahydrobiopterin inhibits the enzyme activity. Zinc is required for catalytic activity. Inhibited by Mg(2+). Positively regulates nitric oxide synthesis in umbilical vein endothelial cells (HUVECs). May be involved in dopamine synthesis. May modify pain sensitivity and persistence. Isoform GCH-1 is the functional enzyme, the potential function of the enzymatically inactive isoforms remains unknown. This Homo sapiens (Human) protein is GTP cyclohydrolase 1 (GCH1).